The chain runs to 190 residues: Elongation factor P (190 aa).

It belongs to the elongation factor P family.

The protein resides in the cytoplasm. Its pathway is protein biosynthesis; polypeptide chain elongation. Involved in peptide bond synthesis. Stimulates efficient translation and peptide-bond synthesis on native or reconstituted 70S ribosomes in vitro. Probably functions indirectly by altering the affinity of the ribosome for aminoacyl-tRNA, thus increasing their reactivity as acceptors for peptidyl transferase. The polypeptide is Elongation factor P (Bartonella bacilliformis (strain ATCC 35685 / KC583 / Herrer 020/F12,63)).